We begin with the raw amino-acid sequence, 160 residues long: Large ribosomal subunit protein eL21B (160 aa).

Positions 114–140 (AKRKEAKAQGKTVQLRRQPAPPATAHF) are disordered.

The protein belongs to the eukaryotic ribosomal protein eL21 family. In terms of assembly, component of the large ribosomal subunit (LSU). Mature yeast ribosomes consist of a small (40S) and a large (60S) subunit. The 40S small subunit contains 1 molecule of ribosomal RNA (18S rRNA) and at least 33 different proteins. The large 60S subunit contains 3 rRNA molecules (25S, 5.8S and 5S rRNA) and at least 46 different proteins.

It is found in the cytoplasm. Component of the ribosome, a large ribonucleoprotein complex responsible for the synthesis of proteins in the cell. The small ribosomal subunit (SSU) binds messenger RNAs (mRNAs) and translates the encoded message by selecting cognate aminoacyl-transfer RNA (tRNA) molecules. The large subunit (LSU) contains the ribosomal catalytic site termed the peptidyl transferase center (PTC), which catalyzes the formation of peptide bonds, thereby polymerizing the amino acids delivered by tRNAs into a polypeptide chain. The nascent polypeptides leave the ribosome through a tunnel in the LSU and interact with protein factors that function in enzymatic processing, targeting, and the membrane insertion of nascent chains at the exit of the ribosomal tunnel. The protein is Large ribosomal subunit protein eL21B (rpl2102) of Schizosaccharomyces pombe (strain 972 / ATCC 24843) (Fission yeast).